A 445-amino-acid polypeptide reads, in one-letter code: Probable cytosol aminopeptidase (445 aa).

The Mn(2+) site is built by Lys-217 and Asp-222. The active site involves Lys-229. Positions 240, 299, and 301 each coordinate Mn(2+). Residue Arg-303 is part of the active site.

This sequence belongs to the peptidase M17 family. Mn(2+) is required as a cofactor.

The protein resides in the cytoplasm. The catalysed reaction is Release of an N-terminal amino acid, Xaa-|-Yaa-, in which Xaa is preferably Leu, but may be other amino acids including Pro although not Arg or Lys, and Yaa may be Pro. Amino acid amides and methyl esters are also readily hydrolyzed, but rates on arylamides are exceedingly low.. The enzyme catalyses Release of an N-terminal amino acid, preferentially leucine, but not glutamic or aspartic acids.. Functionally, presumably involved in the processing and regular turnover of intracellular proteins. Catalyzes the removal of unsubstituted N-terminal amino acids from various peptides. The protein is Probable cytosol aminopeptidase (pepA) of Mycoplasma pneumoniae (strain ATCC 29342 / M129 / Subtype 1) (Mycoplasmoides pneumoniae).